We begin with the raw amino-acid sequence, 183 residues long: MKQLLEFIPLILFFTVYKLYGVQQAAITLVIATVIQLIVLKVLYKKIEKSQWIMGIFVVFFGILTAYFNDLNFLKWKVTIINGLFAAVLLVSQFVFKKPIIQMLLGKELELPTNVWNRLNLGWAGFFIICMLLNIVISYYFSDDVWATFKTFGFTGLSLIAAIATGVYLYPHLKNVENTNEQA.

The next 5 membrane-spanning stretches (helical) occupy residues 19 to 39 (LYGV…QLIV), 53 to 73 (IMGI…DLNF), 76 to 96 (WKVT…QFVF), 121 to 141 (LGWA…SYYF), and 151 to 171 (TFGF…YLYP).

It belongs to the YciB family.

Its subcellular location is the cell inner membrane. Its function is as follows. Plays a role in cell envelope biogenesis, maintenance of cell envelope integrity and membrane homeostasis. The chain is Inner membrane-spanning protein YciB from Actinobacillus pleuropneumoniae serotype 3 (strain JL03).